We begin with the raw amino-acid sequence, 97 residues long: Large ribosomal subunit protein bL27 (97 aa).

The segment at 1–21 is disordered; sequence MAHKKGVGSSRNGRDSNPKYR.

Belongs to the bacterial ribosomal protein bL27 family.

This Gemmatimonas aurantiaca (strain DSM 14586 / JCM 11422 / NBRC 100505 / T-27) protein is Large ribosomal subunit protein bL27.